A 156-amino-acid polypeptide reads, in one-letter code: Arginine repressor (156 aa).

Belongs to the ArgR family.

The protein resides in the cytoplasm. The protein operates within amino-acid biosynthesis; L-arginine biosynthesis [regulation]. In terms of biological role, regulates arginine biosynthesis genes. The chain is Arginine repressor from Yersinia pseudotuberculosis serotype I (strain IP32953).